We begin with the raw amino-acid sequence, 1217 residues long: ATP-dependent helicase/nuclease subunit A (1217 aa).

Positions 10–475 (VIWTDAQWQS…MDLSQNFRSR (466 aa)) constitute a UvrD-like helicase ATP-binding domain. Position 31–38 (31–38 (AAAGSGKT)) interacts with ATP. The UvrD-like helicase C-terminal domain occupies 491-786 (DEQVGEVNYD…RMMTIHSSKG (296 aa)).

Belongs to the helicase family. AddA subfamily. In terms of assembly, heterodimer of AddA and AddB/RexB. It depends on Mg(2+) as a cofactor.

It catalyses the reaction Couples ATP hydrolysis with the unwinding of duplex DNA by translocating in the 3'-5' direction.. The catalysed reaction is ATP + H2O = ADP + phosphate + H(+). Functionally, the heterodimer acts as both an ATP-dependent DNA helicase and an ATP-dependent, dual-direction single-stranded exonuclease. Recognizes the chi site generating a DNA molecule suitable for the initiation of homologous recombination. The AddA nuclease domain is required for chi fragment generation; this subunit has the helicase and 3' -&gt; 5' nuclease activities. The sequence is that of ATP-dependent helicase/nuclease subunit A from Staphylococcus aureus (strain bovine RF122 / ET3-1).